A 686-amino-acid chain; its full sequence is Cadmium, zinc and cobalt-transporting ATPase (686 aa).

The 62-residue stretch at 1-62 (MQEYHIHNLD…FIKQNEPHLS (62 aa)) folds into the HMA domain. Topologically, residues 1 to 72 (MQEYHIHNLD…LSFKEATEKP (72 aa)) are cytoplasmic. Positions 11 and 14 each coordinate Cd(2+). Residues Cys-11 and Cys-14 each contribute to the Co(2+) site. 2 residues coordinate Zn(2+): Cys-11 and Cys-14. A helical membrane pass occupies residues 73 to 92 (LSFTPLIITIMVFLGAILIL). At 93–102 (HLNPSPLIEK) the chain is on the extracellular side. A helical membrane pass occupies residues 103-124 (AMFFVLALVYLVSGKDVILGAF). At 125-131 (RGLRKGQ) the chain is on the cytoplasmic side. A helical transmembrane segment spans residues 132-151 (FFDENALMLIATIAAFFVGA). Residues 152–154 (YEE) lie on the Extracellular side of the membrane. Residues 155–174 (SVSIMVFYSAGEFLQKLAVS) form a helical membrane-spanning segment. Residues 175–308 (RSKKSLKALV…ITKFSRYYTP (134 aa)) lie on the Cytoplasmic side of the membrane. The helical transmembrane segment at 309–327 (SVLFIALMIAVLPPLFSMG) threads the bilayer. Residues 328-332 (SFDEW) lie on the Extracellular side of the membrane. The chain crosses the membrane as a helical span at residues 333-350 (IYRGLVALMVSCPCALVI). Residues 351 to 635 (SVPLGYFGGV…VLAIAKKTKS (285 aa)) lie on the Cytoplasmic side of the membrane. The active-site 4-aspartylphosphate intermediate is Asp-388. Asp-583 and Asp-587 together coordinate Mg(2+). Residues 636–657 (IIWQNILFALGIKAVFIVLGLM) traverse the membrane as a helical segment. The Extracellular portion of the chain corresponds to 658–665 (GVASLWEA). The helical transmembrane segment at 666-681 (VFGDVGVTLLALANSM) threads the bilayer. Residues 682 to 686 (RAMRA) lie on the Cytoplasmic side of the membrane.

It belongs to the cation transport ATPase (P-type) (TC 3.A.3) family. Type IB subfamily.

The protein resides in the cell membrane. The catalysed reaction is Zn(2+)(in) + ATP + H2O = Zn(2+)(out) + ADP + phosphate + H(+). It catalyses the reaction Cd(2+)(in) + ATP + H2O = Cd(2+)(out) + ADP + phosphate + H(+). Functionally, couples the hydrolysis of ATP with the transport of cadmium, zinc and cobalt out of the cell. This ion efflux may influence the activity of urease, which is essential for the survival of the bacterium in the gastric environment. The protein is Cadmium, zinc and cobalt-transporting ATPase (cadA) of Helicobacter pylori (strain ATCC 700392 / 26695) (Campylobacter pylori).